Consider the following 203-residue polypeptide: Glycerol-3-phosphate acyltransferase (203 aa).

5 helical membrane passes run 13–33 (TLAC…LILT), 62–82 (LAAA…AIAS), 88–108 (AGIA…WLSF), 118–138 (IGVL…IWLA), and 159–179 (IALY…MTAI).

Belongs to the PlsY family. In terms of assembly, probably interacts with PlsX.

Its subcellular location is the cell inner membrane. It catalyses the reaction an acyl phosphate + sn-glycerol 3-phosphate = a 1-acyl-sn-glycero-3-phosphate + phosphate. Its pathway is lipid metabolism; phospholipid metabolism. In terms of biological role, catalyzes the transfer of an acyl group from acyl-phosphate (acyl-PO(4)) to glycerol-3-phosphate (G3P) to form lysophosphatidic acid (LPA). This enzyme utilizes acyl-phosphate as fatty acyl donor, but not acyl-CoA or acyl-ACP. The sequence is that of Glycerol-3-phosphate acyltransferase from Rhizobium meliloti (strain 1021) (Ensifer meliloti).